Here is a 3948-residue protein sequence, read N- to C-terminus: Hybrid PKS-NRPS synthetase fsa1 (3948 aa).

The region spanning 4 to 438 (SEPIAVIGSA…GTNAHAIIEA (435 aa)) is the Ketosynthase family 3 (KS3) domain. Catalysis depends on for beta-ketoacyl synthase activity residues C177, H316, and H358. The malonyl-CoA:ACP transacylase (MAT) domain stretch occupies residues 543–846 (IFTGQGTQWP…LDTIEAISEG (304 aa)). The tract at residues 931-1066 (HPLLGRRCHD…AQIKASLGTP (136 aa)) is N-terminal hotdog fold. The interval 931–1233 (HPLLGRRCHD…MELVPFSPAT (303 aa)) is dehydratase (DH) domain. The 305-residue stretch at 931 to 1235 (HPLLGRRCHD…LVPFSPATPA (305 aa)) folds into the PKS/mFAS DH domain. H964 (proton acceptor; for dehydratase activity) is an active-site residue. A C-terminal hotdog fold region spans residues 1081–1235 (LRPVSVDRFY…LVPFSPATPA (155 aa)). D1141 functions as the Proton donor; for dehydratase activity in the catalytic mechanism. The methyltransferase (MT) domain stretch occupies residues 1381–1578 (YEQGFGLNLV…TTPPVHKILP (198 aa)). Residues 2105 to 2277 (TFLLIGLTGE…VAASSIDISS (173 aa)) form a ketoreductase (KR) domain region. One can recognise a Carrier 1 domain in the interval 2389 to 2464 (AIIKESFIVR…DLVDESLDLL (76 aa)). S2424 is subject to O-(pantetheine 4'-phosphoryl)serine. Residues 2475-2555 (EAGNAHPAKP…TDNLTPPRTF (81 aa)) are disordered. 2 stretches are compositionally biased toward polar residues: residues 2487-2505 (VIPQ…QGTS) and 2513-2528 (GSDS…LTSW). Positions 2529 to 2541 (DRQDLSPPDKSDD) are enriched in basic and acidic residues. Over residues 2542–2551 (APNSTDNLTP) the composition is skewed to polar residues. Positions 2547-2976 (DNLTPPRTFP…TQVLLRSYLS (430 aa)) are condensation (C) domain. Positions 3000–3402 (LKVAVDAGKA…PDTFFGTSGT (403 aa)) are adenylation (A) (KR) domain. Residues 3540–3617 (KSLTASEKRL…AMASVLEDCG (78 aa)) form the Carrier 2 domain. Residue S3577 is modified to O-(pantetheine 4'-phosphoryl)serine. A reductase (RED) domain region spans residues 3653-3870 (LTGSSGYLGR…MPVNEIVEAI (218 aa)).

The protein in the C-terminal section; belongs to the NRP synthetase family.

It catalyses the reaction L-serine + 7 malonyl-CoA + acetyl-CoA + 2 S-adenosyl-L-methionine + ATP + 8 NADPH + 11 H(+) = (5S)-3-[(2E,6R,8E,10E,12E)-2,6-dimethyltetradeca-2,8,10,12-tetraenoyl]-5-(hydroxymethyl)pyrrolidine-2,4-dione + AMP + 2 S-adenosyl-L-homocysteine + 7 CO2 + diphosphate + 8 NADP(+) + 8 CoA + 6 H2O. It functions in the pathway mycotoxin biosynthesis. In terms of biological role, hybrid PKS-NRPS synthetase; part of the gene cluster that mediates the biosynthesis of HIV-1 integrase inhibitor equisetin and of fusarisetin A, both trans-fused decalin-containing tetramic acids showing also antimicrobial activity. The PKS module of fsa1 together with the enoylreductase fsa3 catalyze the formation of the polyketide unit which is then conjugated to L-serine by the condensation domain of the fsa1 NRPS module. Activity of the Dieckmann cyclase domain (RED) results in release of the Dieckmann product intermediate. Diels-Alderase fsa2 is involved in endo-selective Diels-Alder cycloaddition to form the decalin ring, leading to the production of N-desmethylequisetin also called trichosetin. Subsequent N-methylation is carried out by fsa4 to give equisetin. The enzymatic gene responsible for the conversion of equisetin to fusarisetin A has not been identified yet and is probably located outside of the fsa cluster. The protein is Hybrid PKS-NRPS synthetase fsa1 of Fusarium sp. (strain FN080326).